Here is a 207-residue protein sequence, read N- to C-terminus: MTSVALYKQDGSQNGNVELNADIFGVEPNENVVFDTILMQRASLRQGTHAVKNRSAVRGGGKKPWRQKGTGRARQGSIRSPQWVGGGVVFGPTPRSYSYRLPKKVSRLALKSVLSQKVLDESFVVVDGLAFDAPKTKEFAAVLAGLNVTTKTLVVLEDDNVTAALAARNLTNVKVIPAKGLNVLDIADADKLVITQPALSQVEEVLA.

A disordered region spans residues 49–77 (HAVKNRSAVRGGGKKPWRQKGTGRARQGS). Residues 60–71 (GGKKPWRQKGTG) are compositionally biased toward basic residues.

It belongs to the universal ribosomal protein uL4 family. Part of the 50S ribosomal subunit.

One of the primary rRNA binding proteins, this protein initially binds near the 5'-end of the 23S rRNA. It is important during the early stages of 50S assembly. It makes multiple contacts with different domains of the 23S rRNA in the assembled 50S subunit and ribosome. Functionally, forms part of the polypeptide exit tunnel. The polypeptide is Large ribosomal subunit protein uL4 (Levilactobacillus brevis (strain ATCC 367 / BCRC 12310 / CIP 105137 / JCM 1170 / LMG 11437 / NCIMB 947 / NCTC 947) (Lactobacillus brevis)).